A 736-amino-acid polypeptide reads, in one-letter code: 3',5'-cyclic-AMP phosphodiesterase 4B (736 aa).

3 disordered regions span residues 51 to 78, 189 to 209, and 282 to 301; these read QLPPLSQRQSERARTPEGDGISRPTTLP, LHGTSNKRSPAASQPPVSRVN, and KQNDVEIPSPTQKDREKKKK. Residue Ser-290 is modified to Phosphoserine. Residues 330-659 enclose the PDEase domain; that stretch reads VNTENEDHLA…NWYQSMIPQS (330 aa). Residue His-406 is the Proton donor of the active site. Residue His-406 coordinates 3',5'-cyclic AMP. Positions 406 and 410 each coordinate AMP. Residues His-410, His-446, Asp-447, and Asp-564 each contribute to the Zn(2+) site. Residues Asp-447, Asp-564, Gln-615, and Phe-618 each coordinate AMP. Asp-447 lines the Mg(2+) pocket. Residue Asp-447 coordinates Mn(2+). 3',5'-cyclic AMP contacts are provided by Gln-615 and Phe-618. Residues Ser-659 and Ser-661 each carry the phosphoserine modification. The interval 685–736 is disordered; that stretch reads DEEDSEGPEKEGEGHSYFSSTKTLCVIDPENRDSLGETDIDIATEDKSPVDT.

It belongs to the cyclic nucleotide phosphodiesterase family. PDE4 subfamily. In terms of assembly, interacts with DISC1. It depends on Zn(2+) as a cofactor. The cofactor is Mg(2+). Requires Mn(2+) as cofactor. Expressed in brain, heart, lung and skeletal muscle. Expressed in white blood cells. In terms of tissue distribution, brain-specific isoform.

The protein localises to the cytoplasm. Its subcellular location is the cell membrane. The catalysed reaction is 3',5'-cyclic AMP + H2O = AMP + H(+). It participates in purine metabolism; 3',5'-cyclic AMP degradation; AMP from 3',5'-cyclic AMP: step 1/1. With respect to regulation, inhibited by rolipram. In terms of biological role, hydrolyzes the second messenger cAMP, which is a key regulator of many important physiological processes. May be involved in mediating central nervous system effects of therapeutic agents ranging from antidepressants to antiasthmatic and anti-inflammatory agents. The sequence is that of 3',5'-cyclic-AMP phosphodiesterase 4B from Homo sapiens (Human).